The sequence spans 288 residues: ATP synthase gamma chain (288 aa).

This sequence belongs to the ATPase gamma chain family. As to quaternary structure, F-type ATPases have 2 components, CF(1) - the catalytic core - and CF(0) - the membrane proton channel. CF(1) has five subunits: alpha(3), beta(3), gamma(1), delta(1), epsilon(1). CF(0) has three main subunits: a, b and c.

It localises to the cell inner membrane. In terms of biological role, produces ATP from ADP in the presence of a proton gradient across the membrane. The gamma chain is believed to be important in regulating ATPase activity and the flow of protons through the CF(0) complex. The sequence is that of ATP synthase gamma chain from Stutzerimonas stutzeri (strain A1501) (Pseudomonas stutzeri).